The primary structure comprises 338 residues: N-acetylmuramate/N-acetylglucosamine kinase (338 aa).

The protein belongs to the kinase AmgK family.

The catalysed reaction is N-acetyl-D-muramate + ATP = N-acetyl-alpha-D-muramate 1-phosphate + ADP + H(+). It carries out the reaction N-acetyl-D-glucosamine + ATP = N-acetyl-alpha-D-glucosamine 1-phosphate + ADP + H(+). It participates in cell wall biogenesis; peptidoglycan recycling. In terms of biological role, sugar kinase that catalyzes the ATP-dependent phosphorylation of N-acetylmuramate (MurNAc) and N-acetylglucosamine (GlcNAc) at its C1 hydroxyl group, leading to MurNAc alpha-1P and GlcNAc alpha-1P, respectively. Is involved in peptidoglycan recycling as part of a cell wall recycling pathway that bypasses de novo biosynthesis of the peptidoglycan precursor UDP-MurNAc. Plays a role in intrinsic resistance to fosfomycin, which targets the de novo synthesis of UDP-MurNAc. The protein is N-acetylmuramate/N-acetylglucosamine kinase of Pseudomonas aeruginosa (strain ATCC 15692 / DSM 22644 / CIP 104116 / JCM 14847 / LMG 12228 / 1C / PRS 101 / PAO1).